Reading from the N-terminus, the 253-residue chain is Aspartate/glutamate leucyltransferase (253 aa).

It belongs to the R-transferase family. Bpt subfamily.

The protein localises to the cytoplasm. The enzyme catalyses N-terminal L-glutamyl-[protein] + L-leucyl-tRNA(Leu) = N-terminal L-leucyl-L-glutamyl-[protein] + tRNA(Leu) + H(+). The catalysed reaction is N-terminal L-aspartyl-[protein] + L-leucyl-tRNA(Leu) = N-terminal L-leucyl-L-aspartyl-[protein] + tRNA(Leu) + H(+). In terms of biological role, functions in the N-end rule pathway of protein degradation where it conjugates Leu from its aminoacyl-tRNA to the N-termini of proteins containing an N-terminal aspartate or glutamate. The protein is Aspartate/glutamate leucyltransferase of Allorhizobium ampelinum (strain ATCC BAA-846 / DSM 112012 / S4) (Agrobacterium vitis (strain S4)).